Here is a 478-residue protein sequence, read N- to C-terminus: UDP-glycosyltransferase 90A1 (478 aa).

Residues Thr289, 343–345 (VDQ), 360–368 (HCGWNSAQE), and 382–385 (MAEQ) contribute to the UDP-alpha-D-glucose site.

Belongs to the UDP-glycosyltransferase family.

This is UDP-glycosyltransferase 90A1 (UGT90A1) from Arabidopsis thaliana (Mouse-ear cress).